Here is a 943-residue protein sequence, read N- to C-terminus: Coiled-coil and C2 domain-containing protein 1A (943 aa).

Position 91 is a phosphothreonine (Thr-91). Disordered stretches follow at residues 186–250 and 300–337; these read NEAD…CSPL and DLSR…VPQP. Low complexity-rich tracts occupy residues 195–206 and 229–238; these read ASGKGAAAGHSH and APSTTTPTSA. Ser-248 bears the Phosphoserine mark. Residues 304 to 319 show a composition bias toward pro residues; that stretch reads LPPPPDQLSPEPPLPA. Residues 339 to 385 are a coiled coil; it reads RNLLEALEQRMERYHVAAAQAKAKGDQRKARMHERIVKQYQDAIRAH. The tract at residues 430 to 483 is disordered; it reads NHDEGSDDEEEETPKKQNTPAASTTQLKSSPSKAPPSGPAPAGKAAPKGTSNRA. Residue Ser-435 is modified to Phosphoserine. The segment covering 445-456 has biased composition (polar residues); sequence KQNTPAASTTQL. The span at 469–478 shows a compositional bias: low complexity; that stretch reads APAGKAAPKG. A coiled-coil region spans residues 477 to 510; sequence KGTSNRAQQQLAFLEGRKKQLLQAALRAKQKNDV. Positions 630–764 constitute a C2 domain; it reads RFEQRTFSVI…ETACEVHEIL (135 aa).

The protein belongs to the CC2D1 family. Highly expressed in brain, expression is enriched in the gray matter and strongest in the olfactory bulb.

It is found in the cytoplasm. Its subcellular location is the nucleus. The protein localises to the cytoskeleton. It localises to the microtubule organizing center. The protein resides in the centrosome. Its function is as follows. Transcription factor that binds specifically to the DRE (dual repressor element) and represses HTR1A gene transcription in neuronal cells. The combination of calcium and ATP specifically inactivates the binding with FRE. May play a role in the altered regulation of HTR1A associated with anxiety and major depression. Mediates HDAC-independent repression of HTR1A promoter in neuronal cell. Performs essential function in controlling functional maturation of synapses. The chain is Coiled-coil and C2 domain-containing protein 1A (Cc2d1a) from Mus musculus (Mouse).